The primary structure comprises 187 residues: Elongation factor P (187 aa).

The protein belongs to the elongation factor P family.

Its subcellular location is the cytoplasm. The protein operates within protein biosynthesis; polypeptide chain elongation. Functionally, involved in peptide bond synthesis. Stimulates efficient translation and peptide-bond synthesis on native or reconstituted 70S ribosomes in vitro. Probably functions indirectly by altering the affinity of the ribosome for aminoacyl-tRNA, thus increasing their reactivity as acceptors for peptidyl transferase. This chain is Elongation factor P, found in Rhodococcus opacus (strain B4).